The following is a 547-amino-acid chain: MAVISLLFLAVMYVVHHPLMVSDRMDLDTLARSRQLEKRMSEEMRQLEIEFEERSRAAEEKQKAENFWRGDTSNDQLVLGKKDMRWPFQASGQDGGPLGWMLGNLWNAGLFCLFLIFELLRQNMQHEPAFESSSEEEEEEIRVVPVSSYTWLSGFPSQEALESFYKHYIQNAIRDLPCTCEFVESFVDDLIEACRVLSRREAHPQLEDCLGIGAAFEKWGTLHETQKFDVLVPIVPPQGTMFILEMRDPTLGRRCGCVKVDSECVCKNEKLLGDVLCLVHHRDHSAMLSKCTSSIKAALCTSSHLDVYKTVQWFRNMVSNAWALVAHKYDFKLTLPPSTTTCKLRLDYRSGRSLSISLVLGVQREDTLVYLVSQAPEREQFTSVDWPESFAACEHLFLKLVGRFAPDNTCHLKCLQIILSLQDHQTLPPGASRPILTSYHFKTALMHLLLRLPLTDWQHRMLSQRLQDLLWFLGRSLQQRSLHHFLIGNTHLPLTIPIPKAFRNAEPVNLFQHLVLNPVAHSQAVEEFHNLLAQVKTLPCSPLAGGL.

Positions methionine 1–histidine 16 are cleaved as a signal peptide. Topologically, residues histidine 17–glycine 96 are extracellular. Positions aspartate 28–asparagine 66 form a coiled coil. Residues proline 97–phenylalanine 117 traverse the membrane as a helical segment. Residues glutamate 118–leucine 547 are Cytoplasmic-facing.

The protein belongs to the ITPRIP family.

The protein localises to the cell membrane. In terms of biological role, functions as a ligand of CD3E, inhibiting TCR-CD3 complex signaling to regulate T cell activation. Induces stable CD3E-NCK1 binding, thereby preventing the CD3E-ZAP70 interaction and subsequently inhibiting the activation of the downstream ERK-NFkB signaling cascade and calcium influx. The polypeptide is Inositol 1,4,5-trisphosphate receptor-interacting protein-like 1 (Itpripl1) (Rattus norvegicus (Rat)).